The sequence spans 94 residues: Dynein light chain, cytoplasmic (94 aa).

Belongs to the dynein light chain family. In terms of assembly, homodimer. Cytoplasmic dynein consists of two catalytic heavy chains (HCs) and a number of non-catalytic subunits which present intermediate chains (ICs), light intermediate chains (LICs) and light chains (LCs). Component of the nuclear pore complex (NPC). The nuclear pore complex constitutes the exclusive means of nucleocytoplasmic transport. NPCs allow the passive diffusion of ions and small molecules and the active, nuclear transport receptor-mediated bidirectional transport of macromolecules such as proteins, RNAs, ribonucleoparticles (RNPs), and ribosomal subunits across the nuclear envelope. Due to its 8-fold rotational symmetry, all subunits are present with 8 copies or multiples thereof.

The protein resides in the cytoplasm. Its subcellular location is the cytoskeleton. The protein localises to the nucleus. It is found in the nuclear pore complex. Functionally, acts as one of several non-catalytic accessory components of the cytoplasmic dynein complex that are thought to be involved in linking dynein to cargos and to adapter proteins that regulate dynein function. Cytoplasmic dynein 1 acts as a motor for the intracellular retrograde motility of vesicles and organelles along microtubules. May play a role in changing or maintaining the spatial distribution of cytoskeletal structures. Also a component of the nuclear pore complex. In Emericella nidulans (strain FGSC A4 / ATCC 38163 / CBS 112.46 / NRRL 194 / M139) (Aspergillus nidulans), this protein is Dynein light chain, cytoplasmic (nudG).